Reading from the N-terminus, the 673-residue chain is tRNA uridine 5-carboxymethylaminomethyl modification enzyme MnmG (673 aa).

Residue 17 to 22 participates in FAD binding; that stretch reads GGGHAG. Residue 284 to 298 participates in NAD(+) binding; sequence GPRYCPSVEDKINRF.

The protein belongs to the MnmG family. In terms of assembly, homodimer. Heterotetramer of two MnmE and two MnmG subunits. It depends on FAD as a cofactor.

It is found in the cytoplasm. Its function is as follows. NAD-binding protein involved in the addition of a carboxymethylaminomethyl (cmnm) group at the wobble position (U34) of certain tRNAs, forming tRNA-cmnm(5)s(2)U34. This Polaromonas sp. (strain JS666 / ATCC BAA-500) protein is tRNA uridine 5-carboxymethylaminomethyl modification enzyme MnmG.